We begin with the raw amino-acid sequence, 546 residues long: Chaperonin GroEL 1 (546 aa).

Residues 30 to 33 (TLGP), K51, 87 to 91 (DGTTT), G415, and D495 contribute to the ATP site. Residues 527 to 546 (DAAPTAAPGGPGAGGPGFDF) are disordered. The segment covering 535 to 546 (GGPGAGGPGFDF) has biased composition (gly residues).

The protein belongs to the chaperonin (HSP60) family. As to quaternary structure, forms a cylinder of 14 subunits composed of two heptameric rings stacked back-to-back. Interacts with the co-chaperonin GroES.

The protein localises to the cytoplasm. The enzyme catalyses ATP + H2O + a folded polypeptide = ADP + phosphate + an unfolded polypeptide.. In terms of biological role, together with its co-chaperonin GroES, plays an essential role in assisting protein folding. The GroEL-GroES system forms a nano-cage that allows encapsulation of the non-native substrate proteins and provides a physical environment optimized to promote and accelerate protein folding. This chain is Chaperonin GroEL 1, found in Burkholderia lata (strain ATCC 17760 / DSM 23089 / LMG 22485 / NCIMB 9086 / R18194 / 383).